A 115-amino-acid chain; its full sequence is Large ribosomal subunit protein uL24 (115 aa).

The protein belongs to the universal ribosomal protein uL24 family. In terms of assembly, part of the 50S ribosomal subunit.

In terms of biological role, one of two assembly initiator proteins, it binds directly to the 5'-end of the 23S rRNA, where it nucleates assembly of the 50S subunit. One of the proteins that surrounds the polypeptide exit tunnel on the outside of the subunit. This is Large ribosomal subunit protein uL24 from Deinococcus geothermalis (strain DSM 11300 / CIP 105573 / AG-3a).